The following is a 244-amino-acid chain: 5-oxoprolinase subunit A (244 aa).

Belongs to the LamB/PxpA family. As to quaternary structure, forms a complex composed of PxpA, PxpB and PxpC.

It catalyses the reaction 5-oxo-L-proline + ATP + 2 H2O = L-glutamate + ADP + phosphate + H(+). In terms of biological role, catalyzes the cleavage of 5-oxoproline to form L-glutamate coupled to the hydrolysis of ATP to ADP and inorganic phosphate. The chain is 5-oxoprolinase subunit A from Salmonella typhi.